Here is a 210-residue protein sequence, read N- to C-terminus: MVADIKGNEQIEKYSWREACDTGSSRMDRKHGKYILNVEHSENQPPITHPNDQEAHSSICWCLPSNDITSDVSPNLTGVCVNPGILAHSRCLQSESCNTQVKEYCRNDWSMWKVFLACLLACVIMTAIGVLIICLVNNKGSANSSIVIQLSTNDGECVTVKPGTPSPACPPTMTTTSTVPASTATESTTSTATAATTSTEPITVAPTDHL.

Residues 1 to 113 (MVADIKGNEQ…YCRNDWSMWK (113 aa)) are Cytoplasmic-facing. A helical; Signal-anchor for type II membrane protein membrane pass occupies residues 114 to 134 (VFLACLLACVIMTAIGVLIIC). The Extracellular portion of the chain corresponds to 135-210 (LVNNKGSANS…PITVAPTDHL (76 aa)). The segment at 168 to 210 (ACPPTMTTTSTVPASTATESTTSTATAATTSTEPITVAPTDHL) is disordered. The segment covering 171-203 (PTMTTTSTVPASTATESTTSTATAATTSTEPIT) has biased composition (low complexity).

As to quaternary structure, interacts with DCTN1 and DCTN2. In terms of tissue distribution, expressed in fibroblast and numerous cancer cell lines (at protein level).

It localises to the golgi apparatus membrane. Its subcellular location is the cell membrane. Its function is as follows. Plays a role in the regulation of cell proliferation. Promotes activation of the AKT1 signaling pathway. Promotes phosphorylation of AKT1 at 'Ser-473'. The polypeptide is Dynactin-associated protein (DYNAP) (Homo sapiens (Human)).